The sequence spans 137 residues: Large ribosomal subunit protein uL16 (137 aa).

Belongs to the universal ribosomal protein uL16 family. Part of the 50S ribosomal subunit.

In terms of biological role, binds 23S rRNA and is also seen to make contacts with the A and possibly P site tRNAs. The sequence is that of Large ribosomal subunit protein uL16 from Bradyrhizobium sp. (strain ORS 278).